The primary structure comprises 100 residues: MLAIENYLILSAILFAIGTIGVLTRRNAIVIFMCIELMLNAVNLTFIAFSRHLGNIDGQVFVFFVMTVAAAEAAVGLALMIAFFKNRESIDVEDVNLMKL.

Transmembrane regions (helical) follow at residues 2–22, 29–49, and 61–81; these read LAIE…TIGV, IVIF…FIAF, and FVFF…ALMI.

Belongs to the complex I subunit 4L family. As to quaternary structure, NDH-1 is composed of 14 different subunits. Subunits NuoA, H, J, K, L, M, N constitute the membrane sector of the complex.

The protein resides in the cell inner membrane. The catalysed reaction is a quinone + NADH + 5 H(+)(in) = a quinol + NAD(+) + 4 H(+)(out). In terms of biological role, NDH-1 shuttles electrons from NADH, via FMN and iron-sulfur (Fe-S) centers, to quinones in the respiratory chain. The immediate electron acceptor for the enzyme in this species is believed to be ubiquinone. Couples the redox reaction to proton translocation (for every two electrons transferred, four hydrogen ions are translocated across the cytoplasmic membrane), and thus conserves the redox energy in a proton gradient. This chain is NADH-quinone oxidoreductase subunit K 2, found in Geobacter sp. (strain M21).